A 506-amino-acid chain; its full sequence is MADTESKKEKKRKSKKISDEEVGDIQESGDFLIKPESKVASLDTSQWPLLLKNFDKLNIRTAHYTPLPHGSNPLKRGIHDYVRSGFINLDKPANPSSHEVVAWIKRILRVEKTGHSGTLDPKVTGCLIVCVERATRLVKSQQSAGKEYVGIVRLHNALENEHQLARALECLTGALFQRPPLIAAVKRQLRVRTIYESKLIEYDPERRLGIFWVSCEAGTYIRTLCVHLGLLLGVGGQMQELRRVRSGVLGEKDNLVTMHDVLDAQWQFDHNKDETYLRRVIFPLEKLLISHKRIVMKDSAVNAICYGAKIMLPGVLRYEDGIEVNQDIVVITTKGEAICTAVALMTTAVISTCDHGVVAKIKRVIMERDTYPRKWGLGPKASQKKMMIQKGLLDKHGKPNNSTPSDWKEGYVDYSTTKVKKGGEASAKRKRDESGSEGEAAAAAQDTSKTEEESKKEKKKKKKEKKQKLAEEAAAEAPAEEETEVTESAKKKKKKKKAKETEADSD.

The segment at 1–26 (MADTESKKEKKRKSKKISDEEVGDIQ) is disordered. Asp120 functions as the Nucleophile in the catalytic mechanism. A PUA domain is found at 291–366 (HKRIVMKDSA…VVAKIKRVIM (76 aa)). Disordered regions lie at residues 391 to 410 (GLLD…WKEG) and 419 to 506 (VKKG…ADSD). Over residues 421–434 (KGGEASAKRKRDES) the composition is skewed to basic and acidic residues. The segment covering 457–466 (EKKKKKKEKK) has biased composition (basic residues).

Belongs to the pseudouridine synthase TruB family. Part of the H/ACA small nucleolar ribonucleoprotein (H/ACA snoRNP) complex. The complex binds a box H/ACA small nucleolar RNA (snoRNA), which may target the specific site of modification within the RNA substrate.

It localises to the nucleus. The protein localises to the nucleolus. The protein resides in the cajal body. It catalyses the reaction uridine in 5S rRNA = pseudouridine in 5S rRNA. Catalytic subunit of H/ACA small nucleolar ribonucleoprotein (H/ACA snoRNP) complex, which catalyzes pseudouridylation of rRNA. This involves the isomerization of uridine such that the ribose is subsequently attached to C5, instead of the normal N1. Pseudouridine ('psi') residues may serve to stabilize the conformation of rRNAs. Required for ribosome biogenesis and telomere maintenance. The protein is H/ACA ribonucleoprotein complex subunit DKC1 of Danio rerio (Zebrafish).